Consider the following 349-residue polypeptide: Prostaglandin reductase 1 (349 aa).

Position 18 is a phosphothreonine (Thr-18). Position 20 is a phosphoserine (Ser-20). Residues 152 to 155 (GAVG), Lys-178, Tyr-193, Asn-217, 239 to 245 (CGAISMY), 270 to 272 (FIF), and Asn-321 contribute to the NADP(+) site. The residue at position 178 (Lys-178) is an N6-(2-hydroxyisobutyryl)lysine; alternate. Lys-178 carries the post-translational modification N6-acetyllysine; alternate.

This sequence belongs to the NADP-dependent oxidoreductase L4BD family. Monomer or homodimer.

Its subcellular location is the cytoplasm. The catalysed reaction is 13,14-dihydro-15-oxo-prostaglandin E1 + NADP(+) = 15-oxoprostaglandin E1 + NADPH + H(+). It catalyses the reaction 13,14-dihydro-15-oxo-prostaglandin E2 + NADP(+) = 15-oxoprostaglandin E2 + NADPH + H(+). It carries out the reaction 13,14-dihydro-15-oxo-prostaglandin F1alpha + NADP(+) = 15-oxoprostaglandin F1alpha + NADPH + H(+). The enzyme catalyses 13,14-dihydro-15-oxo-PGF2alpha + NADP(+) = 15-oxoprostaglandin F2alpha + NADPH + H(+). The catalysed reaction is leukotriene B4 + NADP(+) = 12-oxo-leukotriene B4 + NADPH + H(+). It catalyses the reaction 20-hydroxy-leukotriene B4 + NADP(+) = 12-oxo-20-hydroxy-leukotriene B4 + NADPH + H(+). It carries out the reaction 6-trans-leukotriene B4 + NADP(+) = 12-oxo-(5S)-hydroxy-(6E,8E,10E,14Z)-eicosatetraenoate + NADPH + H(+). The enzyme catalyses (5S,12S)-dihydroxy-(6E,10E,12E,14Z)-eicosatetraenoate + NADP(+) = 12-oxo-(5S)-hydroxy-(6E,8E,10E,14Z)-eicosatetraenoate + NADPH + H(+). The catalysed reaction is an n-alkanal + NADP(+) = an alk-2-enal + NADPH + H(+). It catalyses the reaction hexanal + NADP(+) = (E)-hex-2-enal + NADPH + H(+). It carries out the reaction octanal + NADP(+) = (2E)-octenal + NADPH + H(+). The enzyme catalyses decanal + NADP(+) = (2E)-decenal + NADPH + H(+). The catalysed reaction is dodecanal + NADP(+) = (2E)-dodecenal + NADPH + H(+). It catalyses the reaction 4-hydroxynonanal + NADP(+) = (E)-4-hydroxynon-2-enal + NADPH + H(+). It carries out the reaction pentan-2-one + NADP(+) = (E)-pent-3-en-2-one + NADPH + H(+). The enzyme catalyses nonan-2-one + NADP(+) = (3E)-nonen-2-one + NADPH + H(+). Its function is as follows. NAD(P)H-dependent oxidoreductase involved in metabolic inactivation of pro- and anti-inflammatory eicosanoids: prostaglandins (PG), leukotrienes (LT) and lipoxins (LX). Catalyzes with high efficiency the reduction of the 13,14 double bond of 15-oxoPGs, including 15-oxo-PGE1, 15-oxo-PGE2, 15-oxo-PGF1-alpha and 15-oxo-PGF2-alpha. Catalyzes with lower efficiency the oxidation of the hydroxyl group at C12 of LTB4 and its derivatives, converting them into biologically less active 12-oxo-LTB4 metabolites. Reduces 15-oxo-LXA4 to 13,14 dihydro-15-oxo-LXA4, enhancing neutrophil recruitment at the inflammatory site. Plays a role in metabolic detoxification of alkenals and ketones. Reduces alpha,beta-unsaturated alkenals and ketones, particularly those with medium-chain length, showing highest affinity toward (2E)-decenal and (3E)-3-nonen-2-one. May inactivate 4-hydroxy-2-nonenal, a cytotoxic lipid constituent of oxidized low-density lipoprotein particles. The protein is Prostaglandin reductase 1 (PTGR1) of Oryctolagus cuniculus (Rabbit).